Here is a 279-residue protein sequence, read N- to C-terminus: MRLGAHLSIAKGLPRTAAMATSIGANTFQYFTRNPRGGAARQIPGKEIQAWREARRRADLYPIAGHLPYTVNLGAAAERQQEFTRMVLHDDTLRVAAIDGEYLISHPGHYEGERQAGLDRIIQLIEEAYLSITPPGPMLLLETMAGQGKEVGTIDDLCYILEGLGWPDRVGVCLDSAHLFAAGWDLRTPAGCQQLVQELAAKIGLDRVKAMHLNDSAAPLGSHRDRHAGIGKGELGREGIAAVVNDPFLGELPLFLETPVANYEEYGEEIALIQKLKSV.

Zn(2+) contacts are provided by His-66, His-106, Glu-142, Asp-175, His-178, His-212, Asp-225, His-227, and Glu-257.

It belongs to the AP endonuclease 2 family. It depends on Zn(2+) as a cofactor.

The enzyme catalyses Endonucleolytic cleavage to 5'-phosphooligonucleotide end-products.. Its function is as follows. Endonuclease IV plays a role in DNA repair. It cleaves phosphodiester bonds at apurinic or apyrimidinic (AP) sites, generating a 3'-hydroxyl group and a 5'-terminal sugar phosphate. This Moorella thermoacetica (strain ATCC 39073 / JCM 9320) protein is Probable endonuclease 4.